The primary structure comprises 141 residues: Terrelysin (141 aa).

This sequence belongs to the aegerolysin family.

It is found in the cytoplasm. Functionally, hemolysins are potential virulence factors. Has hemolytic activity against sheep erythrocytes in vitro. In Aspergillus terreus (strain NIH 2624 / FGSC A1156), this protein is Terrelysin.